Here is a 127-residue protein sequence, read N- to C-terminus: MAKPTRKRRVKKNIEFGVAHIHATFNNTIVMITDVHGNALAWSSAGALGFKGSRKSTPFAAQMAAEAAAKSAQEHGLKTVEVTVKGPGSGRESAIRALAAAGLEVTAIRDVTPVPHNGARPPKRRRV.

Belongs to the universal ribosomal protein uS11 family. Part of the 30S ribosomal subunit. Interacts with proteins S7 and S18. Binds to IF-3.

In terms of biological role, located on the platform of the 30S subunit, it bridges several disparate RNA helices of the 16S rRNA. Forms part of the Shine-Dalgarno cleft in the 70S ribosome. The polypeptide is Small ribosomal subunit protein uS11 (Streptococcus pyogenes serotype M49 (strain NZ131)).